Reading from the N-terminus, the 62-residue chain is Large ribosomal subunit protein uL30 (62 aa).

Belongs to the universal ribosomal protein uL30 family. In terms of assembly, part of the 50S ribosomal subunit.

In Roseobacter denitrificans (strain ATCC 33942 / OCh 114) (Erythrobacter sp. (strain OCh 114)), this protein is Large ribosomal subunit protein uL30.